Here is a 583-residue protein sequence, read N- to C-terminus: Poly [ADP-ribose] polymerase 2 (583 aa).

The segment at 1 to 77 (MAARRRRSTG…GMPGRSWASK (77 aa)) is disordered. An N-terminal region (NTR) region spans residues 1 to 103 (MAARRRRSTG…VDPECTAKVG (103 aa)). 2 consecutive short sequence motifs (nuclear localization signal) follow at residues 21–22 (KR) and 35–40 (PAKKTR). Lys37 and Lys38 each carry N6-acetyllysine. Positions 57–67 (ANKDRTEDKQD) are enriched in basic and acidic residues. The 98-residue stretch at 104 to 201 (KAHVYCEGND…EKFEKVPGKY (98 aa)) folds into the WGR domain. A phosphoserine mark is found at Ser226 and Ser232. The PARP alpha-helical domain occupies 231 to 348 (ESQLDLRVQE…DIEIAIKLVK (118 aa)). A PARP catalytic domain is found at 356–583 (HPLDQHYRNL…KVQFNFLQLW (228 aa)). Residues 428–430 (HGS), Gly437, Arg444, and Ser470 contribute to the NAD(+) site. Glu558 (for poly [ADP-ribose] polymerase activity) is an active-site residue.

Belongs to the ARTD/PARP family. As to quaternary structure, component of a base excision repair (BER) complex, containing at least XRCC1, PARP1, POLB and LRIG3. Homo- and heterodimer with PARP1. Interacts (via the PARP catalytic domain) with HPF1. Interacts with core nucleosomes. In terms of processing, auto poly-ADP-ribosylated on serine residues, leading to dissociation of the PARP2-HPF1 complex from chromatin. Poly-ADP-ribosylated by PARP1. Post-translationally, acetylation reduces DNA binding and enzymatic activity. Proteolytically cleaved by caspase-8 (CASP8) in response to apoptosis, leading to its inactivation. As to expression, widely expressed, mainly in actively dividing tissues. The highest levels are in the brain, heart, pancreas, skeletal muscle and testis; also detected in kidney, liver, lung, placenta, ovary and spleen; levels are low in leukocytes, colon, small intestine, prostate and thymus.

It is found in the nucleus. The protein resides in the chromosome. The enzyme catalyses NAD(+) + (ADP-D-ribosyl)n-acceptor = nicotinamide + (ADP-D-ribosyl)n+1-acceptor + H(+).. It catalyses the reaction L-seryl-[protein] + NAD(+) = O-(ADP-D-ribosyl)-L-seryl-[protein] + nicotinamide + H(+). The catalysed reaction is L-aspartyl-[protein] + NAD(+) = 4-O-(ADP-D-ribosyl)-L-aspartyl-[protein] + nicotinamide. It carries out the reaction L-glutamyl-[protein] + NAD(+) = 5-O-(ADP-D-ribosyl)-L-glutamyl-[protein] + nicotinamide. Its activity is regulated as follows. ADP-ribosyltransferase activity is regulated via an allosteric activation mechanism. In absence of activation signal, PARP2 is autoinhibited by the PARP alpha-helical domain (also named HD region), which prevents effective NAD(+)-binding. Activity is highly stimulated by signals, which unfold the PARP alpha-helical domain, relieving autoinhibition. Poly-ADP-ribosyltransferase activity is tightly regulated and PARP2 is removed from damaged chromatin following initial poly-ADP-ribosylation of chromatin to avoid prolonged residence (trapping) that has cytotoxic consequences. CHD1L promotes PARP2 removal from chromatin. ADP-ribosyltransferase activity is inhibited by a number of PARP inhibitors (PARPi) compounds, that are used the treatment of breast or ovarian cancers that have defects in DNA repair by homologous recombination. PARPi molecules (niraparib, talazoparib, and, to a lesser extent, olaparib) also trap PARP2 at DNA damage sites. Its function is as follows. Poly-ADP-ribosyltransferase that mediates poly-ADP-ribosylation of proteins and plays a key role in DNA repair. Mediates glutamate, aspartate or serine ADP-ribosylation of proteins: the ADP-D-ribosyl group of NAD(+) is transferred to the acceptor carboxyl group of target residues and further ADP-ribosyl groups are transferred to the 2'-position of the terminal adenosine moiety, building up a polymer with an average chain length of 20-30 units. Serine ADP-ribosylation of proteins constitutes the primary form of ADP-ribosylation of proteins in response to DNA damage. Mediates glutamate and aspartate ADP-ribosylation of target proteins in absence of HPF1. Following interaction with HPF1, catalyzes serine ADP-ribosylation of target proteins; HPF1 conferring serine specificity by completing the PARP2 active site. PARP2 initiates the repair of double-strand DNA breaks: recognizes and binds DNA breaks within chromatin and recruits HPF1, licensing serine ADP-ribosylation of target proteins, such as histones, thereby promoting decompaction of chromatin and the recruitment of repair factors leading to the reparation of DNA strand breaks. HPF1 initiates serine ADP-ribosylation but restricts the polymerase activity of PARP2 in order to limit the length of poly-ADP-ribose chains. Specifically mediates formation of branched poly-ADP-ribosylation. Branched poly-ADP-ribose chains are specifically recognized by some factors, such as APLF. In addition to proteins, also able to ADP-ribosylate DNA: preferentially acts on 5'-terminal phosphates at DNA strand breaks termini in nicked duplex. The chain is Poly [ADP-ribose] polymerase 2 from Homo sapiens (Human).